The following is a 237-amino-acid chain: Probable transcriptional regulatory protein Bpro_2928 (237 aa).

Belongs to the TACO1 family.

The protein resides in the cytoplasm. This chain is Probable transcriptional regulatory protein Bpro_2928, found in Polaromonas sp. (strain JS666 / ATCC BAA-500).